The following is a 188-amino-acid chain: Adenine phosphoribosyltransferase (188 aa).

The protein belongs to the purine/pyrimidine phosphoribosyltransferase family. In terms of assembly, homodimer.

The protein localises to the cytoplasm. It catalyses the reaction AMP + diphosphate = 5-phospho-alpha-D-ribose 1-diphosphate + adenine. It participates in purine metabolism; AMP biosynthesis via salvage pathway; AMP from adenine: step 1/1. In terms of biological role, catalyzes a salvage reaction resulting in the formation of AMP, that is energically less costly than de novo synthesis. The chain is Adenine phosphoribosyltransferase from Salinispora tropica (strain ATCC BAA-916 / DSM 44818 / JCM 13857 / NBRC 105044 / CNB-440).